We begin with the raw amino-acid sequence, 425 residues long: Probable G-protein coupled receptor 63 (425 aa).

At 1–87 the chain is on the extracellular side; that stretch reads MVVSGVLTAP…VFKSLNLAVQ (87 aa). Asparagine 22, asparagine 34, and asparagine 68 each carry an N-linked (GlcNAc...) asparagine glycan. A helical transmembrane segment spans residues 88-112; sequence IILSAIMIFILFVSFLGNLVVCLMV. At 113–123 the chain is on the cytoplasmic side; sequence YQKAAMRSAIN. The helical transmembrane segment at 124–148 threads the bilayer; it reads ILLASLAFADMLLAVLNMPFALVTI. Residues 149–165 are Extracellular-facing; sequence LTTRWIFGKFFCRLSAM. The chain crosses the membrane as a helical span at residues 166-190; that stretch reads FFWLFVIEGVAILLIISIDRFLIIV. Topologically, residues 191–202 are cytoplasmic; it reads QRQDKLNPYRAK. The helical transmembrane segment at 203 to 222 threads the bilayer; the sequence is VLIAVSWATAFSVAFPLAVG. Topologically, residues 223–247 are extracellular; it reads NPDLQIPSRAPQCVFGYTTNSGYQA. Residues 248-272 traverse the membrane as a helical segment; the sequence is YVILISLISFFIPFLVILYSFMGIL. Over 273-321 the chain is Cytoplasmic; it reads NTLRHNALRIHSYPEGICLSQASKLGLMSLQRPFQMSIDMGFKTRAFTT. The helical transmembrane segment at 322-345 threads the bilayer; sequence ILILFAVFIVCWAPFTTYSLVATF. Residues 346 to 357 are Extracellular-facing; it reads SKHFYYQHNFFE. The chain crosses the membrane as a helical span at residues 358 to 379; that stretch reads ISTWLLWLCYLKSALNPLIYYW. The Cytoplasmic segment spans residues 380–425; it reads RIKKFHDACLDMMPKSFKFLPRLPGHTRRRIRPSAVYVCGEHRTVL.

The protein belongs to the G-protein coupled receptor 1 family. In terms of tissue distribution, brain specific.

Its subcellular location is the cell membrane. In terms of biological role, orphan receptor. May play a role in brain function. This chain is Probable G-protein coupled receptor 63 (Gpr63), found in Mus musculus (Mouse).